An 820-amino-acid chain; its full sequence is Probable protease Ga0182885_104520 (820 aa).

It belongs to the peptidase C25 family.

Its function is as follows. Probably a dedicated protease for substrate gasdermin bGSDM; cleaves the bGSDM precursor, releasing the pore-forming moiety, which integrates into the membrane and triggers cell death. Involved in defense against bacteriophages. Expression of bacterial gasdermin (bGSDM) and this neighboring protease is toxic in E.coli. This chain is Probable protease Ga0182885_104520, found in Desulfuromonadales bacterium.